Here is a 110-residue protein sequence, read N- to C-terminus: uncharacterized protein (110 aa).

Over residues 1–16 the composition is skewed to basic and acidic residues; that stretch reads MSVKLKYDKIDQRNGD. Disordered stretches follow at residues 1–29 and 73–100; these read MSVK…GNGN and IKQQ…ESPN. A compositionally biased stretch (low complexity) spans 20 to 29; that stretch reads GNHNNCGNGN.

This is an uncharacterized protein from Dictyostelium discoideum (Social amoeba).